We begin with the raw amino-acid sequence, 193 residues long: Potassium-transporting ATPase KdpC subunit (193 aa).

The helical transmembrane segment at A10–I30 threads the bilayer.

It belongs to the KdpC family. As to quaternary structure, the system is composed of three essential subunits: KdpA, KdpB and KdpC.

The protein localises to the cell membrane. In terms of biological role, part of the high-affinity ATP-driven potassium transport (or Kdp) system, which catalyzes the hydrolysis of ATP coupled with the electrogenic transport of potassium into the cytoplasm. This subunit acts as a catalytic chaperone that increases the ATP-binding affinity of the ATP-hydrolyzing subunit KdpB by the formation of a transient KdpB/KdpC/ATP ternary complex. This chain is Potassium-transporting ATPase KdpC subunit, found in Herpetosiphon aurantiacus (strain ATCC 23779 / DSM 785 / 114-95).